We begin with the raw amino-acid sequence, 178 residues long: Translation initiation factor IF-3 (178 aa).

This sequence belongs to the IF-3 family. Monomer.

It localises to the cytoplasm. In terms of biological role, IF-3 binds to the 30S ribosomal subunit and shifts the equilibrium between 70S ribosomes and their 50S and 30S subunits in favor of the free subunits, thus enhancing the availability of 30S subunits on which protein synthesis initiation begins. The sequence is that of Translation initiation factor IF-3 from Ralstonia nicotianae (strain ATCC BAA-1114 / GMI1000) (Ralstonia solanacearum).